The primary structure comprises 613 residues: Protein translocase subunit SecD (613 aa).

Transmembrane regions (helical) follow at residues 10–30 (ALVVAVAILSIYQLVPSWFYF), 452–472 (KGTLAALVGLALVVVFMVVYY), 477–497 (LVADVALALNGLLVLAVMSMI), 503–523 (LPGIAGFVLTLGMAVDANVLI), 548–568 (VFWTIVDSHVTTLVAGVVLFQ), and 576–596 (GFAVTLIIGLVASMFTSIVVT).

It belongs to the SecD/SecF family. SecD subfamily. Forms a complex with SecF. Part of the essential Sec protein translocation apparatus which comprises SecA, SecYEG and auxiliary proteins SecDF-YajC and YidC.

It localises to the cell inner membrane. Its function is as follows. Part of the Sec protein translocase complex. Interacts with the SecYEG preprotein conducting channel. SecDF uses the proton motive force (PMF) to complete protein translocation after the ATP-dependent function of SecA. This Anaeromyxobacter dehalogenans (strain 2CP-C) protein is Protein translocase subunit SecD.